The chain runs to 227 residues: Cytochrome c oxidase subunit 2 (227 aa).

The Mitochondrial intermembrane portion of the chain corresponds to 1-14 (MAYPFQLGLQDATS). Residues 15 to 45 (PIMEELLHFHDHTLMIVFLISSLILYIISLM) traverse the membrane as a helical segment. Topologically, residues 46–59 (LTTKLTHTSTMDAQ) are mitochondrial matrix. Residues 60 to 87 (EVETVWTILPAIILILIALPSLRILYMM) form a helical membrane-spanning segment. The Mitochondrial intermembrane portion of the chain corresponds to 88–227 (DEINNPSLTV…YFETWSALMV (140 aa)). Residues H161, C196, E198, C200, H204, and M207 each contribute to the Cu cation site. E198 contacts Mg(2+). The residue at position 218 (Y218) is a Phosphotyrosine.

This sequence belongs to the cytochrome c oxidase subunit 2 family. In terms of assembly, component of the cytochrome c oxidase (complex IV, CIV), a multisubunit enzyme composed of 14 subunits. The complex is composed of a catalytic core of 3 subunits MT-CO1, MT-CO2 and MT-CO3, encoded in the mitochondrial DNA, and 11 supernumerary subunits COX4I, COX5A, COX5B, COX6A, COX6B, COX6C, COX7A, COX7B, COX7C, COX8 and NDUFA4, which are encoded in the nuclear genome. The complex exists as a monomer or a dimer and forms supercomplexes (SCs) in the inner mitochondrial membrane with NADH-ubiquinone oxidoreductase (complex I, CI) and ubiquinol-cytochrome c oxidoreductase (cytochrome b-c1 complex, complex III, CIII), resulting in different assemblies (supercomplex SCI(1)III(2)IV(1) and megacomplex MCI(2)III(2)IV(2)). Found in a complex with TMEM177, COA6, COX18, COX20, SCO1 and SCO2. Interacts with TMEM177 in a COX20-dependent manner. Interacts with COX20. Interacts with COX16. Cu cation serves as cofactor.

It localises to the mitochondrion inner membrane. It catalyses the reaction 4 Fe(II)-[cytochrome c] + O2 + 8 H(+)(in) = 4 Fe(III)-[cytochrome c] + 2 H2O + 4 H(+)(out). Its function is as follows. Component of the cytochrome c oxidase, the last enzyme in the mitochondrial electron transport chain which drives oxidative phosphorylation. The respiratory chain contains 3 multisubunit complexes succinate dehydrogenase (complex II, CII), ubiquinol-cytochrome c oxidoreductase (cytochrome b-c1 complex, complex III, CIII) and cytochrome c oxidase (complex IV, CIV), that cooperate to transfer electrons derived from NADH and succinate to molecular oxygen, creating an electrochemical gradient over the inner membrane that drives transmembrane transport and the ATP synthase. Cytochrome c oxidase is the component of the respiratory chain that catalyzes the reduction of oxygen to water. Electrons originating from reduced cytochrome c in the intermembrane space (IMS) are transferred via the dinuclear copper A center (CU(A)) of subunit 2 and heme A of subunit 1 to the active site in subunit 1, a binuclear center (BNC) formed by heme A3 and copper B (CU(B)). The BNC reduces molecular oxygen to 2 water molecules using 4 electrons from cytochrome c in the IMS and 4 protons from the mitochondrial matrix. In Canis simensis (Ethiopian wolf), this protein is Cytochrome c oxidase subunit 2 (MT-CO2).